Here is a 940-residue protein sequence, read N- to C-terminus: Alanine--tRNA ligase (940 aa).

Zn(2+)-binding residues include His-581, His-585, Cys-683, and His-687.

Belongs to the class-II aminoacyl-tRNA synthetase family. The cofactor is Zn(2+).

The protein localises to the cytoplasm. The enzyme catalyses tRNA(Ala) + L-alanine + ATP = L-alanyl-tRNA(Ala) + AMP + diphosphate. Its function is as follows. Catalyzes the attachment of alanine to tRNA(Ala) in a two-step reaction: alanine is first activated by ATP to form Ala-AMP and then transferred to the acceptor end of tRNA(Ala). Also edits incorrectly charged Ser-tRNA(Ala) and Gly-tRNA(Ala) via its editing domain. In Leptospira borgpetersenii serovar Hardjo-bovis (strain JB197), this protein is Alanine--tRNA ligase.